The following is a 508-amino-acid chain: Cell death protein 3 (508 aa).

The propeptide occupies 1–223 (MMRQDRRNLL…FHEEDMNYVD (223 aa)). The region spanning 2–91 (MRQDRRNLLE…HELAAVLEPL (90 aa)) is the CARD domain. 2 disordered regions span residues 106–130 (PMSP…TRVH) and 148–184 (YTRA…SSAN). Positions 118-127 (LSPSTFSSPT) are enriched in polar residues. The segment covering 171–184 (SPSNSFQSQPSSAN) has biased composition (low complexity). Catalysis depends on residues His317 and Cys360. A required for interaction with ced-4 region spans residues 392–407 (GPLFNFLGCVRPQAQQ).

The protein belongs to the peptidase C14A family. In terms of assembly, the active form is probably a heterodimer of the p17 subunit with either the p15 or p13 subunit which are all derived from the precursor by autocatalysis. Interacts with octameric ced-4 (two ced-3 zymogens per one ced-4 octamer); the interaction causes the autoproteolytic cleavage and activation of ced-3. Processed ced-3 also interacts with ced-4 octamer to form a stable holoenzyme. Interacts (via large subunit p17) with csp-3; the interaction prevents ced-3 autoactivation and delays ced-4-induced ced-3 processing. Interacts (via large subunit p17 or small subunit p13 or p15) with csp-2; the interaction inhibits ced-3 autoactivation. Interacts (via propeptide) with nucleoporin npp-14; the interaction tethers ced-3 to the nuclear membrane and prevents its autoprocessing in absence of ced-4. Interacts with dct-1. May form a complex composed of ced-3, ced-4 and mac-1. Post-translationally, autocatalytic cleavage removes the propeptide and generates the catalytic subunit p17 and two non-catalytic subunits p15 and p13; autoproteolysis is induced by ced-4 oligomer. Cleaved by caspase csp-1 probably at Asp-146 and Asp-376.

Its subcellular location is the nucleus membrane. The protein resides in the perikaryon. The protein localises to the synapse. It is found in the mitochondrion. It localises to the cytoplasm. Its subcellular location is the perinuclear region. The catalysed reaction is Strict requirement for an Asp residue at position P1 and has a preferred cleavage sequence of Asp-Glu-Val-Asp-|-.. With respect to regulation, octameric ced-4 activates zymogen autoprocessing and enhances activity of processed ced-3. Zymogen autoactivation is inhibited by csp-3. csp-3 has no effect on active ced-3. Zymogen autoactivation is inhibited by csp-2. Inhibited by cysteine protease inhibitor iodoacetic acid (CH3COOI). Inhibited by benzyloxycarbonyl-DEVD-fluoro-methyl ketone (zDEVD-fmk). Inhibited by benzyloxycarbonyl-VAD-fluoro-methyl ketone (zVAD-fmk). Not inhibited by N-[N-(L-3-transcarboxirane-2-carbonyl)-leucyl]-agmatine (E-64) or by the serine and cysteine protease inhibitor L-1-chloro-3-[4-to-osylamido]-7-amino-2-heptanone (TLCK). In terms of biological role, acts as a cysteine protease in controlling programmed cell death (apoptosis) by proteolytically activating or inactivating a wide range of substrates. Component of the egl-1, ced-9, ced-4 and ced-3 apoptotic signaling cascade required for the initiation of programmed cell death in cells fated to die during embryonic and postembryonic development. During oogenesis, required for germline apoptosis downstream of ced-9 and ced-4 but independently of egl-1. By cleaving and activating ced-8, promotes phosphatidylserine exposure on the surface of apoptotic cells; phosphatidylserine is a specific marker only present at the surface of apoptotic cells and acts as a specific signal for engulfment. By cleaving and converting dcr-1 into a deoxyribonuclease (DNase), promotes apoptotic chromosomal DNA fragmentation. By cleaving mitochondrial fission protein drp-1, may regulate the removal of mitochondria during apoptosis. During germline apoptosis, cleaves translation initiation factor ifg-1 (isoform p170) promoting cap-independent translation. During male tail morphogenesis, promotes apoptosis of the tail-spike cell downstream of ced-4 but independently of egl-1 and ced-9. By cleaving cnt-1, prevents the activation of the prosurvival akt-1/2 signaling pathway and thus promotes apoptosis. Downstream of ced-4, may play a role in sex-specific cell apoptosis by cleaving sex-determining protein fem-1. May regulate germline apoptosis in response to DNA damage, probably downstream of let-60/ras and mpk-1 pathway. Cleaves ced-9 in vitro. Cleaves csp-2 isoform b resulting in the removal of the propeptide and the generation of csp-2 subunit p31 in vitro. Independently of its apoptotic role has additional functions. Probably by cleaving and thereby activating actin-severing protein gsnl-1, required for the elimination of transient presynaptic components during larval development downstream of egl-1, ced-9 and ced-4 pathway. Together with ain-1, a component of the miRNA-induced-silencing complex (miRISC), regulates temporal cell fate patterning during larval development. Acts in cell fate patterning by cleaving heterochronic protein lin-28, likely promoting its degradation. Also cleaves heterochronic protein lin-14 and exonuclease disl-2 in vitro. Downstream of calreticulin crt-1 and ced-4 and independently of egl-1 and ced-9, plays a role in the initial steps of axonal regrowth following axotomy. Cleaves 14-3-3-like protein ftt-2, tubulin tbb-2 and calreticulin crt-1 in vitro. Plays also a role in resistance to S.typhimurium-mediated infection. The polypeptide is Cell death protein 3 (Caenorhabditis remanei (Caenorhabditis vulgaris)).